The primary structure comprises 325 residues: Brorin (325 aa).

Residues 1 to 27 (MPSSTAMAVGALSSSLLVTCCLMVALC) form the signal peptide. The disordered stretch occupies residues 37-121 (AQAPEQPGQE…RPRGDTPQAE (85 aa)). Composition is skewed to basic and acidic residues over residues 44–56 (GQEK…RDGP) and 64–78 (RPAR…DWKS). The Mediates cell adhesion signature appears at 114–116 (RGD). 2 VWFC domains span residues 153–212 (KGCV…PQCK) and 216–274 (NYCE…PICK).

As to quaternary structure, peripherally associated with AMPAR complex. AMPAR complex consists of an inner core made of 4 pore-forming GluA/GRIA proteins (GRIA1, GRIA2, GRIA3 and GRIA4) and 4 major auxiliary subunits arranged in a twofold symmetry. One of the two pairs of distinct binding sites is occupied either by CNIH2, CNIH3 or CACNG2, CACNG3. The other harbors CACNG2, CACNG3, CACNG4, CACNG8 or GSG1L. This inner core of AMPAR complex is complemented by outer core constituents binding directly to the GluA/GRIA proteins at sites distinct from the interaction sites of the inner core constituents. Outer core constituents include at least PRRT1, PRRT2, CKAMP44/SHISA9, FRRS1L and NRN1. The proteins of the inner and outer core serve as a platform for other, more peripherally associated AMPAR constituents, including VWC2. Alone or in combination, these auxiliary subunits control the gating and pharmacology of the AMPAR complex and profoundly impact their biogenesis and protein processing.

It is found in the secreted. It localises to the extracellular space. The protein localises to the extracellular matrix. The protein resides in the basement membrane. Its subcellular location is the synapse. In terms of biological role, BMP antagonist which may play a role in neural development. Promotes cell adhesion. This chain is Brorin (VWC2), found in Homo sapiens (Human).